A 656-amino-acid polypeptide reads, in one-letter code: MAEIQLTFPDGAQKTFEQATSLLDVAKSISTSLAKKAIAGKFNGEVVDLQQPLLEDGAIEIITKDDQAVNLTATWHTAAFVLAATLSQHYPEMQFGEVTATEDGFYYDTDNEAGQVAVTDLPEIKTEMAKLIQSGEAISRVSVSKDDAKKLFAGQTYKLALLDEVEADQVLVYQLGDYSDFSLAPMLGKVSDVKFFELLSVAGAYWQGKSSNQMLQRIYGTAYPKQEELDADLKRRQEAKERDHRVIGNQLDLFFVDPKVGAGLPYWLPNGATIRRSIERYIIDKEVANGYEHVYTPILANLDLYKQSGHWDHYREDMFPPMDMGDGEMLELRPMNCPSHIQVYKHHPRSYRELPIRIAELGMMHRYEKSGALSGLQRVREMTLNDGHTFVRPDQIQDEFKSILGLMIDVYADFNINDYTFRLSYRDPANTEKYFDDDEMWNKAQAMLKGAMDDLGLDYVEAEGEAAFYGPKLDVQTKTAMGNEETLSTIQLDFMLPERFDLHYVGEDGEMHRPVMIHRGLVSTMERFTAYLTEIYKGAFPTWLAPTQAVIIPVKNDLHYDYAKNIKDEMIKRGLRVRIDDRNEKMGYKIREAQTSKIPYTLVVGDQELAQATVSVRKYGEENAVEEASDMFINAIVAEVGNYSRDGKQHTKKINL.

Residues 1–63 enclose the TGS domain; sequence MAEIQLTFPD…LEDGAIEIIT (63 aa). The segment at 243–541 is catalytic; it reads DHRVIGNQLD…LTEIYKGAFP (299 aa). Residues C337, H388, and H518 each coordinate Zn(2+).

This sequence belongs to the class-II aminoacyl-tRNA synthetase family. In terms of assembly, homodimer. It depends on Zn(2+) as a cofactor.

The protein localises to the cytoplasm. The catalysed reaction is tRNA(Thr) + L-threonine + ATP = L-threonyl-tRNA(Thr) + AMP + diphosphate + H(+). Functionally, catalyzes the attachment of threonine to tRNA(Thr) in a two-step reaction: L-threonine is first activated by ATP to form Thr-AMP and then transferred to the acceptor end of tRNA(Thr). Also edits incorrectly charged L-seryl-tRNA(Thr). The polypeptide is Threonine--tRNA ligase (Latilactobacillus sakei subsp. sakei (strain 23K) (Lactobacillus sakei subsp. sakei)).